We begin with the raw amino-acid sequence, 603 residues long: Myotubularin (603 aa).

The span at 1 to 13 (MASAPTSKYNSHS) shows a compositional bias: polar residues. A disordered region spans residues 1-32 (MASAPTSKYNSHSLENESIKRTSRDGVNRDVG). Ser13 and Ser18 each carry phosphoserine. A compositionally biased stretch (basic and acidic residues) spans 14–32 (LENESIKRTSRDGVNRDVG). Residues 29–97 (RDVGETLPRL…GVISRIEKMG (69 aa)) enclose the GRAM domain. The Myotubularin phosphatase domain maps to 163–538 (GWTVYNPVEE…RHLELWVNYY (376 aa)). A 1,2-diacyl-sn-glycero-3-phospho-(1D-myo-inositol-3,5-bisphosphate) is bound by residues Asn288, Asn313, and Ile314. A 1,2-diacyl-sn-glycero-3-phospho-(1D-myo-inositol-3-phosphate) contacts are provided by Asn288, Asn313, and Ile314. The Phosphocysteine intermediate role is filled by Cys375. A 1,2-diacyl-sn-glycero-3-phospho-(1D-myo-inositol-3,5-bisphosphate)-binding residues include Ser376, Asp377, Gly378, Trp379, Asp380, Arg381, Lys417, and Arg421. 6 residues coordinate a 1,2-diacyl-sn-glycero-3-phospho-(1D-myo-inositol-3-phosphate): Ser376, Asp377, Gly378, Trp379, Asp380, and Arg381. Arg421 lines the a 1,2-diacyl-sn-glycero-3-phospho-(1D-myo-inositol-3-phosphate) pocket. At Thr495 the chain carries Phosphothreonine. A disordered region spans residues 580-603 (AKLSDPSASPSSPSQMMPHVQTHF). Over residues 583–593 (SDPSASPSSPS) the composition is skewed to low complexity. Position 588 is a phosphoserine (Ser588).

Belongs to the protein-tyrosine phosphatase family. Non-receptor class myotubularin subfamily. In terms of assembly, heterodimer with MTMR12. Interacts with KMT2A/MLL1 (via SET domain). Interacts with DES in skeletal muscle but not in cardiac muscle. Interacts with SPEG.

The protein localises to the cytoplasm. The protein resides in the cell membrane. It localises to the cell projection. Its subcellular location is the filopodium. It is found in the ruffle. The protein localises to the late endosome. The protein resides in the myofibril. It localises to the sarcomere. It catalyses the reaction a 1,2-diacyl-sn-glycero-3-phospho-(1D-myo-inositol-3-phosphate) + H2O = a 1,2-diacyl-sn-glycero-3-phospho-(1D-myo-inositol) + phosphate. The catalysed reaction is a 1,2-diacyl-sn-glycero-3-phospho-(1D-myo-inositol-3,5-bisphosphate) + H2O = a 1,2-diacyl-sn-glycero-3-phospho-(1D-myo-inositol-5-phosphate) + phosphate. It carries out the reaction 1,2-dioctanoyl-sn-glycero-3-phospho-(1-D-myo-inositol-3-phosphate) + H2O = 1,2-dioctanoyl-sn-glycero-3-phospho-(1D-myo-inositol) + phosphate. The enzyme catalyses 1,2-dioctanoyl-sn-glycero-3-phospho-(1D-myo-inositol-3,5-bisphosphate) + H2O = 1,2-dioctanoyl-sn-glycero-3-phospho-(1D-myo-inositol-5-phosphate) + phosphate. It catalyses the reaction 1,2-dihexadecanoyl-sn-glycero-3-phospho-(1D-myo-inositol-3,5-phosphate) + H2O = 1,2-dihexadecanoyl-sn-glycero-3-phospho-(1D-myo-inositol-5-phosphate) + phosphate. Its activity is regulated as follows. Allosterically activated by phosphatidylinositol 5-phosphate (PI5P). Functionally, lipid phosphatase which dephosphorylates phosphatidylinositol 3-monophosphate (PI3P) and phosphatidylinositol 3,5-bisphosphate (PI(3,5)P2). Has also been shown to dephosphorylate phosphotyrosine- and phosphoserine-containing peptides. Negatively regulates EGFR degradation through regulation of EGFR trafficking from the late endosome to the lysosome. Plays a role in vacuolar formation and morphology. Regulates desmin intermediate filament assembly and architecture. Plays a role in mitochondrial morphology and positioning. Required for skeletal muscle maintenance but not for myogenesis. In skeletal muscles, stabilizes MTMR12 protein levels. The chain is Myotubularin from Bos taurus (Bovine).